Here is a 288-residue protein sequence, read N- to C-terminus: ATP synthase gamma chain (288 aa).

This sequence belongs to the ATPase gamma chain family. F-type ATPases have 2 components, CF(1) - the catalytic core - and CF(0) - the membrane proton channel. CF(1) has five subunits: alpha(3), beta(3), gamma(1), delta(1), epsilon(1). CF(0) has three main subunits: a, b and c.

It is found in the cell inner membrane. Produces ATP from ADP in the presence of a proton gradient across the membrane. The gamma chain is believed to be important in regulating ATPase activity and the flow of protons through the CF(0) complex. The protein is ATP synthase gamma chain of Laribacter hongkongensis (strain HLHK9).